The chain runs to 195 residues: Peptidyl-tRNA hydrolase (195 aa).

Tyr14 lines the tRNA pocket. His19 (proton acceptor) is an active-site residue. Tyr64 and Asn66 together coordinate tRNA.

It belongs to the PTH family. In terms of assembly, monomer.

Its subcellular location is the cytoplasm. The catalysed reaction is an N-acyl-L-alpha-aminoacyl-tRNA + H2O = an N-acyl-L-amino acid + a tRNA + H(+). Hydrolyzes ribosome-free peptidyl-tRNAs (with 1 or more amino acids incorporated), which drop off the ribosome during protein synthesis, or as a result of ribosome stalling. Its function is as follows. Catalyzes the release of premature peptidyl moieties from peptidyl-tRNA molecules trapped in stalled 50S ribosomal subunits, and thus maintains levels of free tRNAs and 50S ribosomes. This Desulforudis audaxviator (strain MP104C) protein is Peptidyl-tRNA hydrolase.